A 944-amino-acid chain; its full sequence is Tyrosine-protein kinase transmembrane receptor ROR2 (944 aa).

The signal sequence occupies residues 1 to 33 (MARGWVRPSRVPLCARAVWTAAALLLWTPWTAG). The Extracellular segment spans residues 34-403 (EVEDSEAIDT…CSPRDGSKMG (370 aa)). The Ig-like C2-type domain maps to 55–145 (PTLKGYFLNF…VATNGLKTIT (91 aa)). N-linked (GlcNAc...) asparagine glycosylation is present at asparagine 70. 9 disulfide bridges follow: cysteine 83–cysteine 135, cysteine 174–cysteine 239, cysteine 182–cysteine 232, cysteine 223–cysteine 264, cysteine 252–cysteine 300, cysteine 256–cysteine 286, cysteine 316–cysteine 394, cysteine 337–cysteine 377, and cysteine 365–cysteine 389. The FZ domain occupies 169-303 (QEDGFCQPYR…SPDAANCMRI (135 aa)). An N-linked (GlcNAc...) asparagine glycan is attached at asparagine 188. The 79-residue stretch at 316-394 (CYNGSGADYR…RVELCDVPPC (79 aa)) folds into the Kringle domain. The N-linked (GlcNAc...) asparagine glycan is linked to asparagine 318. Residues 404–424 (ILYILVPSIAIPLVIACLFFL) traverse the membrane as a helical segment. At 425–944 (VCMCRNKQKA…TEAAHVQLEA (520 aa)) the chain is on the cytoplasmic side. Residues 473 to 746 (VRFMEELGED…PRFKDIHSRL (274 aa)) form the Protein kinase domain. ATP is bound by residues 479-487 (LGEDRFGKV) and lysine 507. Aspartate 615 (proton acceptor) is an active-site residue. Tyrosine 646 carries the post-translational modification Phosphotyrosine; by autocatalysis. Positions 757 to 779 (SSAQTSGASNTTQTSSLSTSPVS) are disordered. Positions 765 to 779 (SNTTQTSSLSTSPVS) are enriched in low complexity. Residue arginine 785 is modified to Asymmetric dimethylarginine. 2 disordered regions span residues 850-879 (QVPPQMVPKPSSHHSGSGSTSTGYVTTAPS) and 898-929 (QNIAEDVAQSPVQEAEEEEEGSVPETELLGDN). Over residues 857 to 872 (PKPSSHHSGSGSTSTG) the composition is skewed to low complexity.

It belongs to the protein kinase superfamily. Tyr protein kinase family. ROR subfamily. As to quaternary structure, homodimer; promotes osteogenesis. Binds YWHAB. Interacts with WTIP. Interacts with ROR2. Mg(2+) is required as a cofactor.

The protein localises to the cell membrane. The catalysed reaction is L-tyrosyl-[protein] + ATP = O-phospho-L-tyrosyl-[protein] + ADP + H(+). Tyrosine-protein kinase receptor which may be involved in the early formation of the chondrocytes. It seems to be required for cartilage and growth plate development. Phosphorylates YWHAB, leading to induction of osteogenesis and bone formation. In contrast, has also been shown to have very little tyrosine kinase activity in vitro. May act as a receptor for wnt ligand WNT5A which may result in the inhibition of WNT3A-mediated signaling. The protein is Tyrosine-protein kinase transmembrane receptor ROR2 (Ror2) of Mus musculus (Mouse).